Consider the following 162-residue polypeptide: Corticoliberin (162 aa).

An N-terminal signal peptide occupies residues 1-24 (MKFQLWVSTGILLVSLLPCHECRA). The propeptide occupies 25–119 (FIKSPASSPG…QEDPTEKAKR (95 aa)). The disordered stretch occupies residues 91–122 (SQPGMRAASLDGADSPYSAQEDPTEKAKRAEE). Basic and acidic residues predominate over residues 113-122 (PTEKAKRAEE). An Isoleucine amide modification is found at isoleucine 160.

Belongs to the sauvagine/corticotropin-releasing factor/urotensin I family.

The protein localises to the secreted. In terms of biological role, this hormone from hypothalamus regulates the release of corticotropin from pituitary gland. The polypeptide is Corticoliberin (crh) (Xenopus laevis (African clawed frog)).